The primary structure comprises 81 residues: Large ribosomal subunit protein bL31B (81 aa).

This sequence belongs to the bacterial ribosomal protein bL31 family. Type B subfamily. As to quaternary structure, part of the 50S ribosomal subunit.

The sequence is that of Large ribosomal subunit protein bL31B from Lactobacillus acidophilus (strain ATCC 700396 / NCK56 / N2 / NCFM).